We begin with the raw amino-acid sequence, 274 residues long: NH(3)-dependent NAD(+) synthetase (274 aa).

46–53 (GISGGQDS) contributes to the ATP binding site. Asp-52 provides a ligand contact to Mg(2+). Arg-140 provides a ligand contact to deamido-NAD(+). An ATP-binding site is contributed by Thr-160. Glu-165 serves as a coordination point for Mg(2+). Positions 173 and 180 each coordinate deamido-NAD(+). Lys-189 and Thr-211 together coordinate ATP. Residue 260–261 (HK) coordinates deamido-NAD(+).

Belongs to the NAD synthetase family. As to quaternary structure, homodimer.

The enzyme catalyses deamido-NAD(+) + NH4(+) + ATP = AMP + diphosphate + NAD(+) + H(+). The protein operates within cofactor biosynthesis; NAD(+) biosynthesis; NAD(+) from deamido-NAD(+) (ammonia route): step 1/1. Catalyzes the ATP-dependent amidation of deamido-NAD to form NAD. Uses ammonia as a nitrogen source. In Streptococcus equi subsp. equi (strain 4047), this protein is NH(3)-dependent NAD(+) synthetase.